Consider the following 347-residue polypeptide: UDP-N-acetylenolpyruvoylglucosamine reductase (347 aa).

The FAD-binding PCMH-type domain occupies 17 to 187 (IEQLAAQLVV…TAVGLKFAKA (171 aa)). Arg-163 is a catalytic residue. Ser-232 serves as the catalytic Proton donor. Residue Glu-327 is part of the active site.

This sequence belongs to the MurB family. The cofactor is FAD.

Its subcellular location is the cytoplasm. It catalyses the reaction UDP-N-acetyl-alpha-D-muramate + NADP(+) = UDP-N-acetyl-3-O-(1-carboxyvinyl)-alpha-D-glucosamine + NADPH + H(+). Its pathway is cell wall biogenesis; peptidoglycan biosynthesis. Functionally, cell wall formation. This chain is UDP-N-acetylenolpyruvoylglucosamine reductase, found in Vibrio cholerae serotype O1 (strain ATCC 39315 / El Tor Inaba N16961).